Here is a 313-residue protein sequence, read N- to C-terminus: 7,8-didemethyl-8-hydroxy-5-deazariboflavin synthase (313 aa).

The 232-residue stretch at 4 to 235 folds into the Radical SAM core domain; it reads ITYSPAYTLV…AEITLQIPPN (232 aa). The [4Fe-4S] cluster site is built by cysteine 18, cysteine 22, and cysteine 25.

It belongs to the radical SAM superfamily. CofG family. In terms of assembly, consists of two subunits, CofG and CofH. [4Fe-4S] cluster serves as cofactor.

The enzyme catalyses 5-amino-5-(4-hydroxybenzyl)-6-(D-ribitylimino)-5,6-dihydrouracil + S-adenosyl-L-methionine = 7,8-didemethyl-8-hydroxy-5-deazariboflavin + 5'-deoxyadenosine + L-methionine + NH4(+) + H(+). It functions in the pathway cofactor biosynthesis; coenzyme F0 biosynthesis. In terms of biological role, catalyzes the radical-mediated synthesis of 7,8-didemethyl-8-hydroxy-5-deazariboflavin from 5-amino-5-(4-hydroxybenzyl)-6-(D-ribitylimino)-5,6-dihydrouracil. The polypeptide is 7,8-didemethyl-8-hydroxy-5-deazariboflavin synthase (Synechocystis sp. (strain ATCC 27184 / PCC 6803 / Kazusa)).